Consider the following 188-residue polypeptide: uncharacterized protein (188 aa).

A helical membrane pass occupies residues 136–156 (TLVKLLLLFLSLMVVIVGVWW).

The protein localises to the host membrane. This is an uncharacterized protein from Magallana gigas (Pacific oyster).